A 244-amino-acid polypeptide reads, in one-letter code: ATP synthase subunit b 2 (244 aa).

The chain crosses the membrane as a helical span at residues 2–22; that stretch reads LIDWFTIVAQIINFLILVFLL.

Belongs to the ATPase B chain family. In terms of assembly, F-type ATPases have 2 components, F(1) - the catalytic core - and F(0) - the membrane proton channel. F(1) has five subunits: alpha(3), beta(3), gamma(1), delta(1), epsilon(1). F(0) has four main subunits: a(1), b(1), b'(1) and c(10-14). The alpha and beta chains form an alternating ring which encloses part of the gamma chain. F(1) is attached to F(0) by a central stalk formed by the gamma and epsilon chains, while a peripheral stalk is formed by the delta, b and b' chains.

The protein localises to the cellular thylakoid membrane. In terms of biological role, f(1)F(0) ATP synthase produces ATP from ADP in the presence of a proton or sodium gradient. F-type ATPases consist of two structural domains, F(1) containing the extramembraneous catalytic core and F(0) containing the membrane proton channel, linked together by a central stalk and a peripheral stalk. During catalysis, ATP synthesis in the catalytic domain of F(1) is coupled via a rotary mechanism of the central stalk subunits to proton translocation. Its function is as follows. Component of the F(0) channel, it forms part of the peripheral stalk, linking F(1) to F(0). The chain is ATP synthase subunit b 2 from Crocosphaera subtropica (strain ATCC 51142 / BH68) (Cyanothece sp. (strain ATCC 51142)).